The primary structure comprises 587 residues: Tail sheath protein (587 aa).

It belongs to the myoviridae tail sheath protein family. In terms of assembly, homomultimer.

The protein resides in the virion. The protein localises to the host cytoplasm. Functionally, polymerizes as an extended structure around the baseplate-tail tube complex. During ejection, the sheath shifts to a contracted form, thereby making the inner tail tube protrude through the host cell envelope. This chain is Tail sheath protein, found in Staphylococcus phage Twort (strain DSM 17442 / HER 48) (Bacteriophage Twort).